The primary structure comprises 145 residues: Large ribosomal subunit protein uL15 (145 aa).

Residues 1–42 (MELHTLKATPGSRKAKHRVGRGHAAGKGKQAGRGQSGQTKRS) form a disordered region. Positions 13 to 26 (RKAKHRVGRGHAAG) are enriched in basic residues.

It belongs to the universal ribosomal protein uL15 family. In terms of assembly, part of the 50S ribosomal subunit.

In terms of biological role, binds to the 23S rRNA. The chain is Large ribosomal subunit protein uL15 from Metamycoplasma arthritidis (strain 158L3-1) (Mycoplasma arthritidis).